Consider the following 487-residue polypeptide: 2-succinylbenzoate--CoA ligase (487 aa).

Belongs to the ATP-dependent AMP-binding enzyme family. MenE subfamily.

It catalyses the reaction 2-succinylbenzoate + ATP + CoA = 2-succinylbenzoyl-CoA + AMP + diphosphate. Its pathway is quinol/quinone metabolism; 1,4-dihydroxy-2-naphthoate biosynthesis; 1,4-dihydroxy-2-naphthoate from chorismate: step 5/7. It participates in quinol/quinone metabolism; menaquinone biosynthesis. Its function is as follows. Converts 2-succinylbenzoate (OSB) to 2-succinylbenzoyl-CoA (OSB-CoA). In Bacillus velezensis (strain DSM 23117 / BGSC 10A6 / LMG 26770 / FZB42) (Bacillus amyloliquefaciens subsp. plantarum), this protein is 2-succinylbenzoate--CoA ligase.